The chain runs to 270 residues: Probable inner membrane protein BTH_II0599 (270 aa).

Transmembrane regions (helical) follow at residues 24–44, 45–65, 98–118, 150–170, 198–218, and 226–246; these read RNPL…MLVS, LVPV…AVGF, LLTL…CSAL, ALIA…APVL, VYGL…AALM, and YALM…YCSF.

Its subcellular location is the cell inner membrane. Functionally, (Microbial infection) Probably transports the toxic C-terminal region of CdiA-2 from B.pseudomallei strain 1026b across the inner membrane to the cytoplasm, where CdiA has a toxic effect. Expression in E.coli makes the bacteria sensitive to the tRNase domain of B.pseudomallei strain 1026b CdiA-2. This chain is Probable inner membrane protein BTH_II0599, found in Burkholderia thailandensis (strain ATCC 700388 / DSM 13276 / CCUG 48851 / CIP 106301 / E264).